The following is a 316-amino-acid chain: Olfactory receptor 52A5 (316 aa).

Residues Met1–Cys27 lie on the Extracellular side of the membrane. Asn5 carries N-linked (GlcNAc...) asparagine glycosylation. Residues Trp28 to Leu48 traverse the membrane as a helical segment. Residues Val49–Ser56 lie on the Cytoplasmic side of the membrane. A helical transmembrane segment spans residues Leu57–Thr77. The Extracellular segment spans residues Cys78–Phe101. A helical membrane pass occupies residues Gln102–Leu122. Residues Asp123–Gln141 lie on the Cytoplasmic side of the membrane. Residues Phe142 to Leu162 traverse the membrane as a helical segment. Residues Gly163 to Lys199 lie on the Extracellular side of the membrane. Residues Ile200–Ser220 form a helical membrane-spanning segment. The Cytoplasmic portion of the chain corresponds to Tyr221–Ala240. Residues Phe241–Ser261 traverse the membrane as a helical segment. Topologically, residues Phe262–His276 are extracellular. Residues Ile277–Val297 traverse the membrane as a helical segment. Over Lys298–Thr316 the chain is Cytoplasmic.

The protein belongs to the G-protein coupled receptor 1 family.

Its subcellular location is the cell membrane. Odorant receptor. In Homo sapiens (Human), this protein is Olfactory receptor 52A5 (OR52A5).